Reading from the N-terminus, the 283-residue chain is Malonyl-[acyl-carrier protein] O-methyltransferase (283 aa).

This sequence belongs to the methyltransferase superfamily.

The catalysed reaction is malonyl-[ACP] + S-adenosyl-L-methionine = malonyl-[ACP] methyl ester + S-adenosyl-L-homocysteine. The protein operates within cofactor biosynthesis; biotin biosynthesis. Functionally, converts the free carboxyl group of a malonyl-thioester to its methyl ester by transfer of a methyl group from S-adenosyl-L-methionine (SAM). It allows to synthesize pimeloyl-ACP via the fatty acid synthetic pathway. In Acetivibrio thermocellus (strain ATCC 27405 / DSM 1237 / JCM 9322 / NBRC 103400 / NCIMB 10682 / NRRL B-4536 / VPI 7372) (Clostridium thermocellum), this protein is Malonyl-[acyl-carrier protein] O-methyltransferase.